We begin with the raw amino-acid sequence, 358 residues long: 3-dehydroquinate synthase (358 aa).

NAD(+)-binding positions include D70–K75, G104–D108, T128–T129, K141, and K150. Zn(2+) is bound by residues E183, H246, and H263.

It belongs to the sugar phosphate cyclases superfamily. Dehydroquinate synthase family. NAD(+) serves as cofactor. It depends on Co(2+) as a cofactor. The cofactor is Zn(2+).

Its subcellular location is the cytoplasm. The catalysed reaction is 7-phospho-2-dehydro-3-deoxy-D-arabino-heptonate = 3-dehydroquinate + phosphate. It functions in the pathway metabolic intermediate biosynthesis; chorismate biosynthesis; chorismate from D-erythrose 4-phosphate and phosphoenolpyruvate: step 2/7. Functionally, catalyzes the conversion of 3-deoxy-D-arabino-heptulosonate 7-phosphate (DAHP) to dehydroquinate (DHQ). In Bordetella bronchiseptica (strain ATCC BAA-588 / NCTC 13252 / RB50) (Alcaligenes bronchisepticus), this protein is 3-dehydroquinate synthase.